The following is a 108-amino-acid chain: MLTLYFLQCLQAPYILCTSFITLKIHNFFFFFQFTEIRKGGRGEKQKKKYRETEVEEELGKHSAYDGHLGWSTNNCGSTSNCTIRRSRNSTMVPRQAAQLSSILPKYM.

Residues 10–32 form a helical membrane-spanning segment; the sequence is LQAPYILCTSFITLKIHNFFFFF.

The protein localises to the membrane. This is an uncharacterized protein from Saccharomyces cerevisiae (strain ATCC 204508 / S288c) (Baker's yeast).